A 263-amino-acid polypeptide reads, in one-letter code: Probable WRKY transcription factor 62 (263 aa).

A disordered region spans residues 59–104 (DHQDDQSNNSSPQDSSPVLESSRKPLHKRGRKTSMAESSDYHRHES). The segment covering 64 to 74 (QSNNSSPQDSS) has biased composition (low complexity). The WRKY DNA-binding region spans 104–174 (SSTPIYHDGF…GQHICQLHQA (71 aa)).

This sequence belongs to the WRKY group III family.

The protein localises to the nucleus. Transcription factor. Interacts specifically with the W box (5'-(T)TGAC[CT]-3'), a frequently occurring elicitor-responsive cis-acting element. This is Probable WRKY transcription factor 62 (WRKY62) from Arabidopsis thaliana (Mouse-ear cress).